The following is a 148-amino-acid chain: Oleosin 1 (148 aa).

An N-acetylalanine modification is found at Ala-2. A polar region spans residues 2 to 28 (ADQHFQQPLHFQGSYGQQQPRSYQVAK). The tract at residues 29–148 (AATAVTAGGS…HVPSGQQQSS (120 aa)) is hydrophobic. The next 2 membrane-spanning stretches (helical) occupy residues 37–57 (GSLL…LTIA) and 81–101 (GFLT…WIYK).

The protein belongs to the oleosin family.

Its subcellular location is the lipid droplet. It localises to the membrane. In terms of biological role, may have a structural role to stabilize the lipid body during desiccation of the seed by preventing coalescence of the oil. Probably interacts with both lipid and phospholipid moieties of lipid bodies. May also provide recognition signals for specific lipase anchorage in lipolysis during seedling growth. The sequence is that of Oleosin 1 (OLE1) from Prunus dulcis (Almond).